Consider the following 278-residue polypeptide: Urease accessory protein UreD 3 (278 aa).

The protein belongs to the UreD family. In terms of assembly, ureD, UreF and UreG form a complex that acts as a GTP-hydrolysis-dependent molecular chaperone, activating the urease apoprotein by helping to assemble the nickel containing metallocenter of UreC. The UreE protein probably delivers the nickel.

It localises to the cytoplasm. Functionally, required for maturation of urease via the functional incorporation of the urease nickel metallocenter. This is Urease accessory protein UreD 3 from Bradyrhizobium sp. (strain BTAi1 / ATCC BAA-1182).